The chain runs to 318 residues: Phospholipid scramblase 1 (318 aa).

The span at 1–14 shows a compositional bias: polar residues; sequence MDKQNSQMNASHPE. The tract at residues 1-64 is disordered; the sequence is MDKQNSQMNA…GPGPAGFPVP (64 aa). The interval 1 to 84 is proline-rich domain (PRD); it reads MDKQNSQMNA…NQPVGAAGVP (84 aa). The Cytoplasmic portion of the chain corresponds to 1-288; it reads MDKQNSQMNA…IQFPLDLDVK (288 aa). The SH3-binding 1 motif lies at 18-26; sequence PVGYPPQYP. 2 consecutive short sequence motifs (PPXY motif) follow at residues 22–25 and 33–36; these read PPQY and PPGY. Residues 31-44 are compositionally biased toward low complexity; the sequence is QGPPGYSGYPGPQV. Residues 42-50 carry the SH3-binding 2 motif; that stretch reads PQVSYPPPP. Phosphotyrosine; by ABL is present on residues Tyr-69 and Tyr-74. The short motif at 84-92 is the SH3-binding 3 element; the sequence is PWMPAPQPP. The tract at residues 99-290 is interaction with hepatitis C virus E2 glycoprotein; the sequence is LEYLSQIDQI…FPLDLDVKMK (192 aa). Phosphothreonine; by PKC/PRKCD is present on Thr-161. 5 S-palmitoyl cysteine lipidation sites follow: Cys-184, Cys-185, Cys-186, Cys-188, and Cys-189. The short motif at 257 to 266 is the Nuclear localization signal element; the sequence is GKISKHWTGI. Residues 289–305 traverse the membrane as a helical segment; sequence MKAVMIGACFLIDFMFF. Residues 306–318 lie on the Extracellular side of the membrane; the sequence is ESTGSQEQKSGVW.

Belongs to the phospholipid scramblase family. As to quaternary structure, forms homooligomers in the presence of calcium. Interacts with ABL. Interacts with RELT, RELL1 and RELL2. Interacts with OXSR1 in the presence of RELT. Interacts with TOP2A and TOP2B. Interacts with OCLN. Interacts with TRPC5. Interacts with TRPC1 and TRPC4. Interacts with ILDR1. In terms of assembly, (Microbial infection) Interacts with hepatitis C virus E1 and E2 glycoproteins. (Microbial infection) Interacts with T-cell leukemia virus (HTLV)-1 protein Tax (via N-terminus); this interaction represses Tax homodimerization. As to quaternary structure, (Microbial infection) Interacts with HIV-1 protein Tat; this interaction represses the Tat-dependent transactivation of the HIV-1 long terminal repeat (LTR) and reduces the nuclear translocation of Tat. In terms of assembly, (Microbial infection) Interacts with hepatitis B virus protein HBx; this interaction promotes the proteasomal degradation of HBx. (Microbial infection) Interacts with human cytomegalovirus proteins IE1 and IE2. As to quaternary structure, (Microbial infection) Interacts with Epstein Barr virus (EBV) lytic switch protein BZLF1; this interaction negatively regulates the transcriptional regulatory activity of BZLF1 by preventing the formation of the BZLF1-CBP complex. In terms of assembly, (Microbial infection) Interacts with influenza virus nucleoprotein NP. It depends on Ca(2+) as a cofactor. Mg(2+) is required as a cofactor. Requires Zn(2+) as cofactor. Phosphorylation at Thr-161 by PKC/PKCD increases its phospholipid scramblase activity during both cell stimulation and apoptosis. Phosphorylated by OXSR1 in the presence of RELT. Post-translationally, palmitoylation is required for its phospholipid scramblase activity. Palmitoylation regulates its localization to the cell membrane or the nucleus; trafficking to the cell membrane is dependent upon palmitoylation whereas in the absence of palmitoylation, localizes to the nucleus. Expressed in platelets, erythrocyte membranes, lymphocytes, spleen, thymus, prostate, testis, uterus, intestine, colon, heart, placenta, lung, liver, kidney and pancreas. Not detected in brain and skeletal muscle.

It localises to the cell membrane. The protein localises to the nucleus. It is found in the cytoplasm. Its subcellular location is the perinuclear region. The enzyme catalyses a 1,2-diacyl-sn-glycero-3-phosphocholine(in) = a 1,2-diacyl-sn-glycero-3-phosphocholine(out). The catalysed reaction is a 1,2-diacyl-sn-glycero-3-phosphoethanolamine(in) = a 1,2-diacyl-sn-glycero-3-phosphoethanolamine(out). It catalyses the reaction a 1,2-diacyl-sn-glycero-3-phospho-L-serine(in) = a 1,2-diacyl-sn-glycero-3-phospho-L-serine(out). Its activity is regulated as follows. Activated by Pb(2+) and Hg(2+) ions. Phosphorylation at Thr-161 by PKC/PKCD increases its phospholipid scramblase activity during both cell stimulation and apoptosis. Functionally, catalyzes calcium-induced ATP-independent rapid bidirectional and non-specific movement of phospholipids (lipid scrambling or lipid flip-flop) between the inner and outer leaflet of the plasma membrane resulting in collapse of the phospholipid asymmetry which leads to phosphatidylserine externalization on the cell surface. Mediates calcium-dependent phosphatidylserine externalization and apoptosis in neurons via its association with TRPC5. Also exhibits magnesium-dependent nuclease activity against double-stranded DNA and RNA but not single-stranded DNA and can enhance DNA decatenation mediated by TOP2A. Negatively regulates FcR-mediated phagocytosis in differentiated macrophages. May contribute to cytokine-regulated cell proliferation and differentiation. May play a role in the antiviral response of interferon (IFN) by amplifying and enhancing the IFN response through increased expression of select subset of potent antiviral genes. Inhibits the functions of viral transactivators, including human T-cell leukemia virus (HTLV)-1 protein Tax, human immunodeficiency virus (HIV)-1 Tat, human hepatitis B virus (HBV) HBx, Epstein-Barr virus (EBV) BZLF1 and human cytomegalovirus IE1 and IE2 proteins through direct interactions. Also mediates the inhibition of influenza virus infection by preventing nuclear import of the viral nucleoprotein/NP. Plays a crucial role as a defense factor against SARS-CoV-2 independently of its scramblase activity by directly targeting nascent viral vesicles to prevent virus-membrane fusion and the release of viral RNA into the host-cell cytosol. Its function is as follows. (Microbial infection) Acts as an attachment receptor for HCV. The sequence is that of Phospholipid scramblase 1 (PLSCR1) from Homo sapiens (Human).